The following is a 449-amino-acid chain: MGKLFGTDGVRGVANKELTCELAFDLGRAGAYVLTEMHKKPKILIGKDTRISCDMLEAALCAGLTSVGADVYLAGVVTTPAIAYLVKSHGFDAGIMISASHNPYEFNGIKFFNSQGFKLSDQIEEKIEDIILNKKWDEVPHAQFDAIGRVNRVDLKKDYQEYLKSTLNGASFKGLKIVIDCANGAAYKIAPEVFEELGAEVVVINNQPDGTNINKECGSTHLKMLQQEVVKNRADFGIAYDGDADRTLFVDEEGNIVDGDKIMLLLAQNLKQQGRLSRNTLIVTVMSNMGLFVAAKELGIELEVTKVGDRYVLEKMLEGGYSIGGEQSGHIILLDFATTGDGILTSLQLTKLIRESGKKLSDLAKIMKVYPQVLVNAKVENGKKDLYSKDPVILEAIKKVEEKLNGKGRVLIRPSGTEPLIRVMIEGEDYEEIKKDAEALASLIESRLS.

The Phosphoserine intermediate role is filled by serine 100. Residues serine 100, aspartate 241, aspartate 243, and aspartate 245 each contribute to the Mg(2+) site. Phosphoserine is present on serine 100.

The protein belongs to the phosphohexose mutase family. The cofactor is Mg(2+). Post-translationally, activated by phosphorylation.

It catalyses the reaction alpha-D-glucosamine 1-phosphate = D-glucosamine 6-phosphate. In terms of biological role, catalyzes the conversion of glucosamine-6-phosphate to glucosamine-1-phosphate. This chain is Phosphoglucosamine mutase, found in Caldicellulosiruptor bescii (strain ATCC BAA-1888 / DSM 6725 / KCTC 15123 / Z-1320) (Anaerocellum thermophilum).